The following is a 315-amino-acid chain: Methionyl-tRNA formyltransferase (315 aa).

114-117 (SLLP) contributes to the (6S)-5,6,7,8-tetrahydrofolate binding site.

The protein belongs to the Fmt family.

The enzyme catalyses L-methionyl-tRNA(fMet) + (6R)-10-formyltetrahydrofolate = N-formyl-L-methionyl-tRNA(fMet) + (6S)-5,6,7,8-tetrahydrofolate + H(+). Attaches a formyl group to the free amino group of methionyl-tRNA(fMet). The formyl group appears to play a dual role in the initiator identity of N-formylmethionyl-tRNA by promoting its recognition by IF2 and preventing the misappropriation of this tRNA by the elongation apparatus. This chain is Methionyl-tRNA formyltransferase, found in Corynebacterium glutamicum (strain R).